The chain runs to 354 residues: Hydrophobic dipeptide epimerase (354 aa).

Substrate is bound by residues T134, K159, and 159 to 161; that span reads KIK. A Mg(2+)-binding site is contributed by D189. N191 lines the substrate pocket. Mg(2+) is bound by residues E215 and D240. Substrate is bound by residues K264, 292-295, and 318-320; these read CMAE and DLD.

This sequence belongs to the mandelate racemase/muconate lactonizing enzyme family. Mg(2+) serves as cofactor.

Catalyzes the epimerization of L-Ile-L-Tyr to L-Ile-D-Tyr (in vitro). Catalyzes the epimerization of dipeptides, with a preference for substrates with a hydrophobic or basic amino acid in the first position, followed by an aromatic residue in the second position. Has epimerase activity with L-Ile-L-Tyr, L-Val-L-Tyr and L-Arg-L-Tyr (in vitro). In Enterococcus faecalis (strain ATCC 700802 / V583), this protein is Hydrophobic dipeptide epimerase.